Here is a 766-residue protein sequence, read N- to C-terminus: MPEHEERHSHGVNRSLSLGSSMRSLFKSQRSRGPSDRGANGTPGPAQKVDIRVDTASASREHTPVVHKTPQSANPELQQPRHHLGLPNILKLNLTPTNSNPQSKSGSPVSQNTSQESLITDTDIEVEDYRPSKDSRRTVRNASPMSSNGNLPINANTVIGPDTSSNNIDSMLDGTGLRPFYEEADSSDYIENLRSFPLPTGHYAPGFIQPPKSPTSSRVPSRSNSRKGREHAGTVSAAQLPRYNETPGKCILDLEYFKLYEDGHHVHTLKVMTSVNSDANGNSHNHASKNDGHLDLPKGDDGSVVRQKSKFSLSGFFKPHSKEDIANADEKLKYAVSLLPRNKICSKVETDRDTFAPVFTKTRSHVQSGSDDSSDDDEELDDPSIPKIVNKNAAVGSQELKLINNLSEKIRMGLSTAAKNKHNQSSKHRTPSGAGVQDENQPAFADLYGKCVAVVGHGAYGVVKVCARTRDEKDDLPATKTYMDSKKIYFAVKELKPRPSDPIEKFSTRITSEFIIGHSLSHYYDKNGEQSAPNILSIIDLLEYNDTFIEVMEFCPAGDLYSLLTARKNKIGKPLHPLEADCFMKQLLKGIQFMHDHGVAHCDLKPENILLHPNGLLKICDFGTSCVFQTAWERHVHFQTGLQGSEPYVAPEEYNPKKEYDPRLVDCWSIGIVYCTMIMGHYLWRNAARGKDSLYDSFYEEMASKKEFYVFEELRHINQEINRLRRIALYQIFQPNPEKRISIDKLLQTGWMRHTKCCVPYKNIPR.

5 disordered regions span residues 1-165 (MPEH…DTSS), 201-240 (GHYA…AAQL), 277-297 (SDAN…LDLP), 362-384 (TRSH…DDPS), and 417-437 (AAKN…AGVQ). Residues 14-25 (RSLSLGSSMRSL) show a composition bias toward low complexity. A compositionally biased stretch (basic and acidic residues) spans 49 to 64 (VDIRVDTASASREHTP). Residues 94–120 (LTPTNSNPQSKSGSPVSQNTSQESLIT) are compositionally biased toward polar residues. The span at 127–137 (EDYRPSKDSRR) shows a compositional bias: basic and acidic residues. Composition is skewed to polar residues over residues 140–165 (RNAS…DTSS) and 214–223 (PTSSRVPSRS). The span at 288–297 (SKNDGHLDLP) shows a compositional bias: basic and acidic residues. The segment covering 372 to 382 (DSSDDDEELDD) has biased composition (acidic residues). The span at 419–430 (KNKHNQSSKHRT) shows a compositional bias: basic residues. In terms of domain architecture, Protein kinase spans 449-752 (GKCVAVVGHG…IDKLLQTGWM (304 aa)). ATP is bound by residues 455-463 (VGHGAYGVV) and K493. D603 serves as the catalytic Proton acceptor.

This sequence belongs to the protein kinase superfamily. CAMK Ser/Thr protein kinase family. NPR/HAL subfamily. HAL5 sub-subfamily.

It is found in the cytoplasm. The enzyme catalyses L-seryl-[protein] + ATP = O-phospho-L-seryl-[protein] + ADP + H(+). The catalysed reaction is L-threonyl-[protein] + ATP = O-phospho-L-threonyl-[protein] + ADP + H(+). This is Probable serine/threonine-protein kinase KKQ8 (KKQ8) from Candida glabrata (strain ATCC 2001 / BCRC 20586 / JCM 3761 / NBRC 0622 / NRRL Y-65 / CBS 138) (Yeast).